A 103-amino-acid polypeptide reads, in one-letter code: Cycloviolacin-O9 (103 aa).

The signal sequence occupies residues 1–9; sequence AAFALPAFA. A propeptide spanning residues 10 to 69 is cleaved from the precursor; it reads SFEKDVITPAALEAVLNRKAPLYNIMMENDAILNVIANVKTVISNPVLEEALLKTNHGVN. Positions 70 to 99 form a cross-link, cyclopeptide (Gly-Asn); it reads GIPCGESCVWIPCLTSAVGCSCKSKVCYRN. 3 disulfide bridges follow: C73/C89, C77/C91, and C82/C96. Positions 100 to 103 are excised as a propeptide; the sequence is SLDN.

This is a cyclic peptide.

In terms of biological role, probably participates in a plant defense mechanism. The sequence is that of Cycloviolacin-O9 from Viola biflora (Yellow wood violet).